A 266-amino-acid chain; its full sequence is Proteasome subunit alpha type-1 (266 aa).

The protein belongs to the peptidase T1A family. As to quaternary structure, the 26S proteasome consists of a 20S proteasome core and two 19S regulatory subunits. The 20S proteasome core is composed of 28 subunits that are arranged in four stacked rings, resulting in a barrel-shaped structure. The two end rings are each formed by seven alpha subunits, and the two central rings are each formed by seven beta subunits. The catalytic chamber with the active sites is on the inside of the barrel.

It is found in the cytoplasm. It localises to the nucleus. In terms of biological role, the proteasome is a multicatalytic proteinase complex which is characterized by its ability to cleave peptides with Arg, Phe, Tyr, Leu, and Glu adjacent to the leaving group at neutral or slightly basic pH. The proteasome has an ATP-dependent proteolytic activity. The protein is Proteasome subunit alpha type-1 of Trypanosoma brucei brucei.